Here is a 245-residue protein sequence, read N- to C-terminus: 5-oxoprolinase subunit A (245 aa).

Belongs to the LamB/PxpA family. As to quaternary structure, forms a complex composed of PxpA, PxpB and PxpC.

The catalysed reaction is 5-oxo-L-proline + ATP + 2 H2O = L-glutamate + ADP + phosphate + H(+). In terms of biological role, catalyzes the cleavage of 5-oxoproline to form L-glutamate coupled to the hydrolysis of ATP to ADP and inorganic phosphate. This chain is 5-oxoprolinase subunit A, found in Yersinia enterocolitica serotype O:8 / biotype 1B (strain NCTC 13174 / 8081).